The sequence spans 159 residues: Betainyl-CoA thioesterase (159 aa).

It belongs to the betainyl-CoA thioesterase family.

It catalyses the reaction N,N,N-trimethylglycyl-CoA + H2O = glycine betaine + CoA + H(+). Its pathway is amine and polyamine metabolism; carnitine metabolism. In terms of biological role, catalyzes the cleavage of betainyl-CoA (N,N,N-trimethylglycyl-CoA) into glycine betaine and coenzyme A. Is involved in a L-carnitine degradation pathway that allows P.aeruginosa to grow on L-carnitine as the sole source of carbon and nitrogen. This chain is Betainyl-CoA thioesterase, found in Pseudomonas aeruginosa (strain ATCC 15692 / DSM 22644 / CIP 104116 / JCM 14847 / LMG 12228 / 1C / PRS 101 / PAO1).